A 215-amino-acid chain; its full sequence is Urease accessory protein UreG (215 aa).

The tract at residues 1-21 (MNAPAPSSARRTKKLPPLRVG) is disordered. GTP is bound at residue 24-31 (GPVGSGKT).

The protein belongs to the SIMIBI class G3E GTPase family. UreG subfamily. Homodimer. UreD, UreF and UreG form a complex that acts as a GTP-hydrolysis-dependent molecular chaperone, activating the urease apoprotein by helping to assemble the nickel containing metallocenter of UreC. The UreE protein probably delivers the nickel.

The protein resides in the cytoplasm. Functionally, facilitates the functional incorporation of the urease nickel metallocenter. This process requires GTP hydrolysis, probably effectuated by UreG. The chain is Urease accessory protein UreG from Burkholderia lata (strain ATCC 17760 / DSM 23089 / LMG 22485 / NCIMB 9086 / R18194 / 383).